The primary structure comprises 142 residues: Phosphoribosyl-AMP cyclohydrolase (142 aa).

Position 92 (D92) interacts with Mg(2+). A Zn(2+)-binding site is contributed by C93. Mg(2+)-binding residues include D94 and D96. Zn(2+) contacts are provided by C109 and C116.

It belongs to the PRA-CH family. As to quaternary structure, homodimer. Requires Mg(2+) as cofactor. It depends on Zn(2+) as a cofactor.

The protein resides in the cytoplasm. It carries out the reaction 1-(5-phospho-beta-D-ribosyl)-5'-AMP + H2O = 1-(5-phospho-beta-D-ribosyl)-5-[(5-phospho-beta-D-ribosylamino)methylideneamino]imidazole-4-carboxamide. The protein operates within amino-acid biosynthesis; L-histidine biosynthesis; L-histidine from 5-phospho-alpha-D-ribose 1-diphosphate: step 3/9. Functionally, catalyzes the hydrolysis of the adenine ring of phosphoribosyl-AMP. The protein is Phosphoribosyl-AMP cyclohydrolase of Halorhodospira halophila (strain DSM 244 / SL1) (Ectothiorhodospira halophila (strain DSM 244 / SL1)).